Reading from the N-terminus, the 1025-residue chain is Multidrug resistance protein MdtC (1025 aa).

12 consecutive transmembrane segments (helical) span residues 3 to 23, 333 to 353, 360 to 380, 387 to 407, 431 to 451, 463 to 483, 528 to 548, 853 to 873, 875 to 895, 897 to 917, 953 to 973, and 984 to 1004; these read FFAL…AITL, EVEQ…FLFL, IIPA…MYLC, LSLM…IVVL, VGFT…PLLL, FAVT…TLTP, LVGV…ISIP, VILI…LYES, VHPL…LLAL, LFNA…IGIV, PIMM…LSGG, and ITIV…TPVV.

It belongs to the resistance-nodulation-cell division (RND) (TC 2.A.6) family. MdtC subfamily. As to quaternary structure, part of a tripartite efflux system composed of MdtA, MdtB and MdtC. MdtC forms a heteromultimer with MdtB.

It is found in the cell inner membrane. The MdtABC tripartite complex confers resistance against novobiocin and deoxycholate. The polypeptide is Multidrug resistance protein MdtC (Escherichia coli O8 (strain IAI1)).